Here is a 142-residue protein sequence, read N- to C-terminus: ATP synthase epsilon chain (142 aa).

Belongs to the ATPase epsilon chain family. In terms of assembly, F-type ATPases have 2 components, CF(1) - the catalytic core - and CF(0) - the membrane proton channel. CF(1) has five subunits: alpha(3), beta(3), gamma(1), delta(1), epsilon(1). CF(0) has three main subunits: a, b and c.

The protein localises to the cell inner membrane. Functionally, produces ATP from ADP in the presence of a proton gradient across the membrane. The sequence is that of ATP synthase epsilon chain from Shewanella sediminis (strain HAW-EB3).